We begin with the raw amino-acid sequence, 125 residues long: Large ribosomal subunit protein bL12 (125 aa).

This sequence belongs to the bacterial ribosomal protein bL12 family. Homodimer. Part of the ribosomal stalk of the 50S ribosomal subunit. Forms a multimeric L10(L12)X complex, where L10 forms an elongated spine to which 2 to 4 L12 dimers bind in a sequential fashion. Binds GTP-bound translation factors.

In terms of biological role, forms part of the ribosomal stalk which helps the ribosome interact with GTP-bound translation factors. Is thus essential for accurate translation. This chain is Large ribosomal subunit protein bL12, found in Gluconobacter oxydans (strain 621H) (Gluconobacter suboxydans).